Consider the following 467-residue polypeptide: Asparagine--tRNA ligase (467 aa).

Belongs to the class-II aminoacyl-tRNA synthetase family. Homodimer.

It is found in the cytoplasm. The enzyme catalyses tRNA(Asn) + L-asparagine + ATP = L-asparaginyl-tRNA(Asn) + AMP + diphosphate + H(+). The protein is Asparagine--tRNA ligase of Protochlamydia amoebophila (strain UWE25).